Here is a 318-residue protein sequence, read N- to C-terminus: Transaldolase (318 aa).

The active-site Schiff-base intermediate with substrate is lysine 132.

Belongs to the transaldolase family. Type 1 subfamily. In terms of assembly, homodimer.

The protein localises to the cytoplasm. It catalyses the reaction D-sedoheptulose 7-phosphate + D-glyceraldehyde 3-phosphate = D-erythrose 4-phosphate + beta-D-fructose 6-phosphate. It functions in the pathway carbohydrate degradation; pentose phosphate pathway; D-glyceraldehyde 3-phosphate and beta-D-fructose 6-phosphate from D-ribose 5-phosphate and D-xylulose 5-phosphate (non-oxidative stage): step 2/3. Its function is as follows. Transaldolase is important for the balance of metabolites in the pentose-phosphate pathway. The polypeptide is Transaldolase (Shewanella baltica (strain OS195)).